Reading from the N-terminus, the 296-residue chain is Putative methyltransferase HI_1523 (296 aa).

It belongs to the N(4)/N(6)-methyltransferase family.

The sequence is that of Putative methyltransferase HI_1523 from Haemophilus influenzae (strain ATCC 51907 / DSM 11121 / KW20 / Rd).